Reading from the N-terminus, the 463-residue chain is MAEAVFRAPKRKRRVYESYESPLPIPFSQDQSPRKEFRIFQAEMISNNVVVRGTEDMEQLYGKGYFGKGILSRSRPNFTISNPKLAARWKGVQTDMPIITSEKYQHRVEWARDFMRRQGHDESTVQKILTDYTEPLEPPYRERKGESPQHEPLSSKADSSLEGREGKDELSVTTGGAGQSDDLQGLNTHSDCRQEGPGHATLTVASPSSLNGHAIEDPEALSQIPCCSQEALGQQDDLWPEASSQIAGESRAAHEYVLIEEELCDVQEGAAPHDELLKRKRLVCRRNPYRIFEYLQLSLEEAFFLAYALGCLSIYYEKEPLTIVKLWQAFTAVQPTFRTTYMAYHYFRSKGWVPKVGLKYGTDLLLYRKGPPFYHASYSVIIELVDDNFEGSLRRPFSWKSLAALSRVSGNVSKELMLCYLIKPSTMTNEDMETPECMRRIQVQEVILSRWVSSRERSDQDEL.

Phosphoserine occurs at positions 32 and 147. Residues His-120–His-213 form a disordered region. Composition is skewed to basic and acidic residues over residues Pro-139 to Gln-149 and Ser-159 to Leu-170. Residues Tyr-367 and His-375 contribute to the active site. Ser-406, Ser-409, and Ser-413 each carry phosphoserine. The active site involves Lys-414.

This sequence belongs to the tRNA-intron endonuclease family. In terms of assembly, tRNA splicing endonuclease is a heterotetramer composed of TSEN2, TSEN15, TSEN34/LENG5 and TSEN54. tRNA splicing endonuclease complex also contains proteins of the pre-mRNA 3'-end processing machinery such as CLP1, CPSF1, CPSF4 and CSTF2.

The protein resides in the nucleus. It is found in the nucleolus. The catalysed reaction is pretRNA = a 3'-half-tRNA molecule with a 5'-OH end + a 5'-half-tRNA molecule with a 2',3'-cyclic phosphate end + an intron with a 2',3'-cyclic phosphate and a 5'-hydroxyl terminus.. Constitutes one of the two catalytic subunit of the tRNA-splicing endonuclease complex, a complex responsible for identification and cleavage of the splice sites in pre-tRNA. It cleaves pre-tRNA at the 5'- and 3'-splice sites to release the intron. The products are an intron and two tRNA half-molecules bearing 2',3'-cyclic phosphate and 5'-OH termini. There are no conserved sequences at the splice sites, but the intron is invariably located at the same site in the gene, placing the splice sites an invariant distance from the constant structural features of the tRNA body. Probably carries the active site for 5'-splice site cleavage. The tRNA splicing endonuclease is also involved in mRNA processing via its association with pre-mRNA 3'-end processing factors, establishing a link between pre-tRNA splicing and pre-mRNA 3'-end formation, suggesting that the endonuclease subunits function in multiple RNA-processing events. The sequence is that of tRNA-splicing endonuclease subunit Sen2 (Tsen2) from Rattus norvegicus (Rat).